The primary structure comprises 633 residues: tRNA uridine 5-carboxymethylaminomethyl modification enzyme MnmG (633 aa).

FAD contacts are provided by residues 15–20 (GAGHAG), Ile-127, and Ser-182. NAD(+) is bound at residue 276-290 (GPRYCPSIEDKIVRF). Gln-373 is an FAD binding site.

Belongs to the MnmG family. In terms of assembly, homodimer. Heterotetramer of two MnmE and two MnmG subunits. It depends on FAD as a cofactor.

The protein localises to the cytoplasm. Functionally, NAD-binding protein involved in the addition of a carboxymethylaminomethyl (cmnm) group at the wobble position (U34) of certain tRNAs, forming tRNA-cmnm(5)s(2)U34. The sequence is that of tRNA uridine 5-carboxymethylaminomethyl modification enzyme MnmG from Streptococcus agalactiae serotype Ia (strain ATCC 27591 / A909 / CDC SS700).